Here is a 207-residue protein sequence, read N- to C-terminus: Ribonuclease HII (207 aa).

An RNase H type-2 domain is found at 17-207 (RIVAGVDEVG…SFKPLAAFVD (191 aa)). A divalent metal cation-binding residues include Asp-23, Glu-24, and Asp-120.

The protein belongs to the RNase HII family. Requires Mn(2+) as cofactor. The cofactor is Mg(2+).

It is found in the cytoplasm. It catalyses the reaction Endonucleolytic cleavage to 5'-phosphomonoester.. Endonuclease that specifically degrades the RNA of RNA-DNA hybrids. This Herpetosiphon aurantiacus (strain ATCC 23779 / DSM 785 / 114-95) protein is Ribonuclease HII.